Consider the following 397-residue polypeptide: Lysophospholipid transporter LplT (397 aa).

The next 11 helical transmembrane spans lie at 16 to 36 (MLAV…LLFA), 53 to 73 (VLQM…GQFA), 91 to 111 (LGAG…LVGI), 139 to 159 (LMES…GILA), 164 to 184 (LAAL…NLWI), 227 to 247 (LFWG…PVAL), 253 to 273 (AMPT…AGAA), 281 to 301 (TVSR…AFAV), 305 to 325 (LLPA…FIVP), 352 to 372 (NVAM…GVPP), and 373 to 393 (VAVG…LWVW).

This sequence belongs to the major facilitator superfamily. LplT (TC 2.A.1.42) family.

Its subcellular location is the cell inner membrane. Functionally, catalyzes the facilitated diffusion of 2-acyl-glycero-3-phosphoethanolamine (2-acyl-GPE) into the cell. The protein is Lysophospholipid transporter LplT of Klebsiella pneumoniae subsp. pneumoniae (strain ATCC 700721 / MGH 78578).